Consider the following 682-residue polypeptide: Serine/threonine-protein kinase PLK2 (682 aa).

The segment at 25–67 is disordered; that stretch reads ACGGDSKKKRPQQPSEDGQPQAQVTPAAPHHHHHHSHSGPEIS. Residues 36 to 48 are compositionally biased toward polar residues; it reads QQPSEDGQPQAQV. Residues 79-331 enclose the Protein kinase domain; the sequence is YCRGKVLGKG…LDDIIRHDFF (253 aa). ATP-binding positions include 85–93 and lysine 108; that span reads LGKGGFAKC. Catalysis depends on aspartate 202, which acts as the Proton acceptor. Threonine 236 carries the post-translational modification Phosphothreonine. The interval 403–432 is disordered; sequence SITQQPSKHRADEEPQPPPTTVARSGTSAV. 2 POLO box domains span residues 500–578 and 598–682; these read WVTK…YMEE and YLLQ…QRCN.

Belongs to the protein kinase superfamily. Ser/Thr protein kinase family. CDC5/Polo subfamily. In terms of assembly, interacts with NSF; causing NSF dissociation from GRIA2. Interacts with CIB1. Catalytic activity is enhanced by phosphorylation of Thr-236. In terms of tissue distribution, brain, lung and heart.

It localises to the cytoplasm. The protein resides in the cytoskeleton. Its subcellular location is the microtubule organizing center. It is found in the centrosome. The protein localises to the centriole. It localises to the cell projection. The protein resides in the dendrite. It carries out the reaction L-seryl-[protein] + ATP = O-phospho-L-seryl-[protein] + ADP + H(+). It catalyses the reaction L-threonyl-[protein] + ATP = O-phospho-L-threonyl-[protein] + ADP + H(+). With respect to regulation, activated by phosphorylation of Thr-236. Once activated, activity is stimulated by binding target proteins. Tumor suppressor serine/threonine-protein kinase involved in synaptic plasticity, centriole duplication and G1/S phase transition. Polo-like kinases act by binding and phosphorylating proteins that are already phosphorylated on a specific motif recognized by the POLO box domains. Phosphorylates CPAP, NPM1, RAPGEF2, RASGRF1, SNCA, SIPA1L1 and SYNGAP1. Plays a key role in synaptic plasticity and memory by regulating the Ras and Rap protein signaling: required for overactivity-dependent spine remodeling by phosphorylating the Ras activator RASGRF1 and the Rap inhibitor SIPA1L1 leading to their degradation by the proteasome. Conversely, phosphorylates the Rap activator RAPGEF2 and the Ras inhibitor SYNGAP1, promoting their activity. Also regulates synaptic plasticity independently of kinase activity, via its interaction with NSF that disrupts the interaction between NSF and the GRIA2 subunit of AMPARs, leading to a rapid rundown of AMPAR-mediated current that occludes long term depression. Required for procentriole formation and centriole duplication by phosphorylating CPAP and NPM1, respectively. Its induction by p53/TP53 suggests that it may participate in the mitotic checkpoint following stress. This Mus musculus (Mouse) protein is Serine/threonine-protein kinase PLK2 (Plk2).